A 169-amino-acid polypeptide reads, in one-letter code: Small proline-rich protein 3 (169 aa).

Positions 1–24 (MSSYQQKQTFTPPPQLQQQQVKQP) are enriched in low complexity. The tract at residues 1 to 57 (MSSYQQKQTFTPPPQLQQQQVKQPSQPPPQEIFVPTTKEPCHSKVPQPGNTKIPEPG) is disordered. The residue at position 2 (Ser2) is an N-acetylserine. 14 repeat units span residues 43–50 (SKVPQPGN), 51–58 (TKIPEPGC), 59–66 (TKVPEPGC), 67–74 (TKVPEPGC), 75–82 (TKVPEPGC), 83–90 (TKVPEPGC), 91–98 (TKVPEPGC), 99–106 (TKVPEPGY), 107–114 (TKVPEPGS), 115–122 (IKVPDQGF), 123–130 (IKFPEPGA), 131–138 (IKVPEQGY), 139–146 (TKVPVPGY), and 147–154 (TKLPEPCP). A 14 X 8 AA approximate tandem repeats region spans residues 43-154 (SKVPQPGNTK…GYTKLPEPCP (112 aa)). Positions 150-169 (PEPCPSTVTPGPAQQKTKQK) are disordered. Residues 155-169 (STVTPGPAQQKTKQK) show a composition bias toward polar residues.

It localises to the cytoplasm. Its function is as follows. Cross-linked envelope protein of keratinocytes. The protein is Small proline-rich protein 3 (SPRR3) of Homo sapiens (Human).